A 152-amino-acid chain; its full sequence is Putative membrane protein insertion efficiency factor (152 aa).

Positions Ala81–Val152 are disordered.

This sequence belongs to the UPF0161 family.

The protein resides in the cell membrane. In terms of biological role, could be involved in insertion of integral membrane proteins into the membrane. The chain is Putative membrane protein insertion efficiency factor from Frankia casuarinae (strain DSM 45818 / CECT 9043 / HFP020203 / CcI3).